The chain runs to 707 residues: MDANLRRKLDELPAEPGCYLMKDRAGEVVYVGKASSLRSRVRSYFDAGRGDQRAFVALLDGLLGDLEVIVTRSEKEAVLLENELIKKHRPRFNVRLRDDKDFIVLKLDERHPYPRLEVRRAREKRQPGARYFGPYSSASSIRETLRMVNRHFQLRTCSDHVFDHRKRPCILYQIHRCPAPCVYEVPAEEYRQSVEDAVEFLEGREGELVERLRGRMAGAAEGLRFEEAARLRDQLQAVERSLEKQRVLMSDRGDRDVIGLYREGPDLVVQVLSMRAGKLQDAQAHPFREQEFPAEEILSSFLSLYYEHTDAPDEILVPLEPVQAEALADVLSERRGRRVRLLTPQRGAKADLLDVARRNAEQGFRAWHEHDERREQALASLAKALHLARPPRWMECYDISTFQGALAVGSGVSMKDGEPDKANYRRYKVKAVAGQDDFAMLHEVVTRRLRRALGEGQLPDLIVIDGGKGQLNAALAAAKDLGVPTRPSPGNPDAPFVELVGLAKSRLVDGPALGTARVVARRGRRAEARLADAAEAAEKGFVSELARSPERVFLPGRKDPVVLRQNSAELFLLARLRDEAHRFAITFHRKLRRERNFQSVLEEIPGIGEGRKRALLRHFGALRRVREATPEEIAQVEGFGPRQAAAVHAFFHRPDAPPAAADEPSGAPEGTPAGGPAEAIPDAAIAATEAEIDAALADEDASPEPAA.

One can recognise a GIY-YIG domain in the interval 14-94 (AEPGCYLMKD…IKKHRPRFNV (81 aa)). Residues 206 to 241 (GELVERLRGRMAGAAEGLRFEEAARLRDQLQAVERS) enclose the UVR domain. The interval 654–684 (PDAPPAAADEPSGAPEGTPAGGPAEAIPDAA) is disordered. A compositionally biased stretch (low complexity) spans 658-684 (PAAADEPSGAPEGTPAGGPAEAIPDAA).

The protein belongs to the UvrC family. Interacts with UvrB in an incision complex.

The protein resides in the cytoplasm. The UvrABC repair system catalyzes the recognition and processing of DNA lesions. UvrC both incises the 5' and 3' sides of the lesion. The N-terminal half is responsible for the 3' incision and the C-terminal half is responsible for the 5' incision. The protein is UvrABC system protein C of Anaeromyxobacter dehalogenans (strain 2CP-C).